The sequence spans 175 residues: Adenine phosphoribosyltransferase (175 aa).

The protein belongs to the purine/pyrimidine phosphoribosyltransferase family. As to quaternary structure, homodimer.

Its subcellular location is the cytoplasm. The enzyme catalyses AMP + diphosphate = 5-phospho-alpha-D-ribose 1-diphosphate + adenine. The protein operates within purine metabolism; AMP biosynthesis via salvage pathway; AMP from adenine: step 1/1. Functionally, catalyzes a salvage reaction resulting in the formation of AMP, that is energically less costly than de novo synthesis. This chain is Adenine phosphoribosyltransferase, found in Lactobacillus johnsonii (strain CNCM I-12250 / La1 / NCC 533).